The chain runs to 472 residues: MPIATINPATGETVKTFTPASDAEVDAAIARAYERFLDYRHSTTFAQRAQWANATADLLEAEADEVAAMMTLEMGKTLKSAKAEALKCAKGFRYYAQNAEQLLADEPADAGKVGAARAYIRYQPLGVVLAVMPWNFPLWQAVRFAAPALMAGNVGILKHASNVPQSALYLADVITRGGFPEGCFQTLLVPSSAVERILRDPRVAAATLTGSEPAGQSVAAIAGDEIKPTVLELGGSDPFIVMPSADLDEAVKTAVTARVQNNGQSCIAAKRFIVHTDIYDAFVDKFVEQMKALKVGDPTDPATDVGPLATESGRDEIAKQVDDAVAAGATLRCGGKPLDGPGWFYPPTVVTDITKDMALYTEEVFGPVASMYRAADIDEAIEIANATTFGLGSNAWTNDAAEQQRFIDDIEAGQVFINGMTVSYPELGFGGVKRSGYGRELAGLGIRAFCNAKTVWIGSSKSGDAGGGSKVE.

Residues 134 to 135 (WN), 158 to 161 (KHAS), and 210 to 211 (GS) each bind NADP(+). The Proton acceptor role is filled by Glu232. Leu233 lines the NADP(+) pocket. The active-site Nucleophile is the Cys266. Glu363 lines the NADP(+) pocket.

It belongs to the aldehyde dehydrogenase family.

The enzyme catalyses succinate semialdehyde + NADP(+) + H2O = succinate + NADPH + 2 H(+). Its function is as follows. Catalyzes the NADP(+)-dependent oxidation of succinate semialdehyde to succinate. It is believed to be the main source of succinate semialdehyde dehydrogenase activity in Mycobacterium. The polypeptide is Succinate-semialdehyde dehydrogenase [NADP(+)] (gabD1) (Mycolicibacterium paratuberculosis (strain ATCC BAA-968 / K-10) (Mycobacterium paratuberculosis)).